The primary structure comprises 281 residues: Pantothenate synthetase (281 aa).

Met-31 to His-38 contributes to the ATP binding site. His-38 serves as the catalytic Proton donor. Gln-62 serves as a coordination point for (R)-pantoate. Gln-62 is a beta-alanine binding site. Residue Gly-148–Asp-151 participates in ATP binding. Gln-154 serves as a coordination point for (R)-pantoate. ATP-binding positions include Val-177 and Leu-185–Arg-188.

The protein belongs to the pantothenate synthetase family. In terms of assembly, homodimer.

It localises to the cytoplasm. It catalyses the reaction (R)-pantoate + beta-alanine + ATP = (R)-pantothenate + AMP + diphosphate + H(+). The protein operates within cofactor biosynthesis; (R)-pantothenate biosynthesis; (R)-pantothenate from (R)-pantoate and beta-alanine: step 1/1. Catalyzes the condensation of pantoate with beta-alanine in an ATP-dependent reaction via a pantoyl-adenylate intermediate. The sequence is that of Pantothenate synthetase from Dinoroseobacter shibae (strain DSM 16493 / NCIMB 14021 / DFL 12).